The chain runs to 217 residues: PRA1 family protein B3 (217 aa).

Residues 1-24 are disordered; it reads MMANPPTLPISDHSGGGSQSQQPV. The next 5 helical transmembrane spans lie at 76–96, 98–118, 138–158, 162–182, and 193–213; these read LPYF…LSLL, HPFS…LYLF, LGVL…GSLL, LMIG…EDLF, and LLSF…STPA.

Belongs to the PRA1 family. Interacts with PRA1B1, PRA1B2, PRA1B4, PRA1B5, PRA1B6 and PRA1E. In terms of tissue distribution, expressed in hypocotyls and shoot apex.

It is found in the endosome membrane. Its function is as follows. May be involved in both secretory and endocytic intracellular trafficking in the endosomal/prevacuolar compartments. In Arabidopsis thaliana (Mouse-ear cress), this protein is PRA1 family protein B3 (PRA1B3).